The sequence spans 305 residues: Dihydroorotate dehydrogenase B (NAD(+)), catalytic subunit (305 aa).

FMN contacts are provided by residues S21 and 45-46 (KG). Residues K45 and 69-73 (NAVGL) contribute to the substrate site. The FMN site is built by N99 and N127. Residue N127 coordinates substrate. C130 serves as the catalytic Nucleophile. Residues K165 and I191 each contribute to the FMN site. Position 192-193 (192-193 (NT)) interacts with substrate. Residues G217, 243 to 244 (GG), and 265 to 266 (GT) each bind FMN.

The protein belongs to the dihydroorotate dehydrogenase family. Type 1 subfamily. In terms of assembly, heterotetramer of 2 PyrK and 2 PyrD type B subunits. FMN is required as a cofactor.

The protein resides in the cytoplasm. The enzyme catalyses (S)-dihydroorotate + NAD(+) = orotate + NADH + H(+). It functions in the pathway pyrimidine metabolism; UMP biosynthesis via de novo pathway; orotate from (S)-dihydroorotate (NAD(+) route): step 1/1. In terms of biological role, catalyzes the conversion of dihydroorotate to orotate with NAD(+) as electron acceptor. This is Dihydroorotate dehydrogenase B (NAD(+)), catalytic subunit (pyrD) from Parabacteroides distasonis (strain ATCC 8503 / DSM 20701 / CIP 104284 / JCM 5825 / NCTC 11152).